Here is an 82-residue protein sequence, read N- to C-terminus: U-actitoxin-Avd3p (82 aa).

The N-terminal stretch at 1-16 is a signal peptide; it reads MVFLLCFFLVADVSYG. Residues 21-71 form the BPTI/Kunitz inhibitor domain; that stretch reads CELPKVVGPCRASHPRYYYNSSSKRCEKFNYGGCRGNANNFHTLEECEKVC. 3 cysteine pairs are disulfide-bonded: C21–C71, C30–C54, and C46–C67. A propeptide spanning residues 76–82 is cleaved from the precursor; the sequence is RDSPKEN.

It belongs to the venom Kunitz-type family. Sea anemone type 2 potassium channel toxin subfamily.

Its subcellular location is the secreted. It localises to the nematocyst. Its function is as follows. Serine protease inhibitor that inhibits both tissue and plasma kallikreins. Has hemolytic activity. Inhibits voltage-gated potassium channels (Kv). This chain is U-actitoxin-Avd3p, found in Anemonia viridis (Snakelocks anemone).